The following is a 504-amino-acid chain: Maturase K (504 aa).

This sequence belongs to the intron maturase 2 family. MatK subfamily.

The protein resides in the plastid. The protein localises to the chloroplast. Usually encoded in the trnK tRNA gene intron. Probably assists in splicing its own and other chloroplast group II introns. This chain is Maturase K, found in Berzelia lanuginosa (Buttonbush).